Here is a 205-residue protein sequence, read N- to C-terminus: Small ribosomal subunit protein uS4 (205 aa).

An S4 RNA-binding domain is found at 93 to 171 (SRVSSVLYRS…SPHYLEVDRE (79 aa)).

It belongs to the universal ribosomal protein uS4 family. As to quaternary structure, part of the 30S ribosomal subunit. Contacts protein S5. The interaction surface between S4 and S5 is involved in control of translational fidelity.

In terms of biological role, one of the primary rRNA binding proteins, it binds directly to 16S rRNA where it nucleates assembly of the body of the 30S subunit. Its function is as follows. With S5 and S12 plays an important role in translational accuracy. The polypeptide is Small ribosomal subunit protein uS4 (Neorickettsia sennetsu (strain ATCC VR-367 / Miyayama) (Ehrlichia sennetsu)).